Reading from the N-terminus, the 217-residue chain is Growth hormone variant (217 aa).

An N-terminal signal peptide occupies residues 1-26 (MAAGSRTSLLLAFGLLCLSWLQEGSA). 2 cysteine pairs are disulfide-bonded: Cys-79/Cys-191 and Cys-208/Cys-215. Phosphoserine is present on Ser-132. Asn-166 carries N-linked (GlcNAc...) asparagine glycosylation. Position 176 is a phosphoserine (Ser-176).

This sequence belongs to the somatotropin/prolactin family. In terms of assembly, monomer, dimer, trimer, tetramer and pentamer, disulfide-linked or non-covalently associated, in homomeric and heteromeric combinations. Can also form a complex either with GHBP or with the alpha2-macroglobulin complex. Expressed in the placenta.

It is found in the secreted. Its function is as follows. Plays an important role in growth control. Its major role in stimulating body growth is to stimulate the liver and other tissues to secrete IGF1. It stimulates both the differentiation and proliferation of myoblasts. It also stimulates amino acid uptake and protein synthesis in muscle and other tissues. The chain is Growth hormone variant (GH2) from Homo sapiens (Human).